The following is a 304-amino-acid chain: UDP-N-acetylenolpyruvoylglucosamine reductase (304 aa).

Residues 33-198 (KVGGPVDILL…LEVTFNLEKG (166 aa)) enclose the FAD-binding PCMH-type domain. The active site involves R177. S227 serves as the catalytic Proton donor. E297 is a catalytic residue.

It belongs to the MurB family. FAD serves as cofactor.

The protein resides in the cytoplasm. The catalysed reaction is UDP-N-acetyl-alpha-D-muramate + NADP(+) = UDP-N-acetyl-3-O-(1-carboxyvinyl)-alpha-D-glucosamine + NADPH + H(+). Its pathway is cell wall biogenesis; peptidoglycan biosynthesis. Functionally, cell wall formation. The chain is UDP-N-acetylenolpyruvoylglucosamine reductase from Clostridium kluyveri (strain NBRC 12016).